Here is a 294-residue protein sequence, read N- to C-terminus: Urease accessory protein UreD 1 (294 aa).

The disordered stretch occupies residues methionine 1–alanine 20.

Belongs to the UreD family. In terms of assembly, ureD, UreF and UreG form a complex that acts as a GTP-hydrolysis-dependent molecular chaperone, activating the urease apoprotein by helping to assemble the nickel containing metallocenter of UreC. The UreE protein probably delivers the nickel.

Its subcellular location is the cytoplasm. In terms of biological role, required for maturation of urease via the functional incorporation of the urease nickel metallocenter. This Methylorubrum populi (strain ATCC BAA-705 / NCIMB 13946 / BJ001) (Methylobacterium populi) protein is Urease accessory protein UreD 1.